Consider the following 310-residue polypeptide: Tyrosine recombinase XerC (310 aa).

Residues 11 to 97 form the Core-binding (CB) domain; the sequence is NSLQKPLERF…SLRSFFDFLI (87 aa). One can recognise a Tyr recombinase domain in the interval 118–298; it reads PLPKNLDVDE…DFQHLAQAYD (181 aa). Active-site residues include Arg157, Lys181, His250, Arg253, and His276. The active-site O-(3'-phospho-DNA)-tyrosine intermediate is the Tyr285.

It belongs to the 'phage' integrase family. XerC subfamily. Forms a cyclic heterotetrameric complex composed of two molecules of XerC and two molecules of XerD.

It is found in the cytoplasm. Its function is as follows. Site-specific tyrosine recombinase, which acts by catalyzing the cutting and rejoining of the recombining DNA molecules. The XerC-XerD complex is essential to convert dimers of the bacterial chromosome into monomers to permit their segregation at cell division. It also contributes to the segregational stability of plasmids. This Vibrio parahaemolyticus serotype O3:K6 (strain RIMD 2210633) protein is Tyrosine recombinase XerC.